A 351-amino-acid chain; its full sequence is LETM1 domain-containing protein 1 (351 aa).

Residues 1 to 130 (MLSGMALCRT…FRRDIIKAAP (130 aa)) lie on the Cytoplasmic side of the membrane. The helical transmembrane segment at 131–151 (VVIISIPPFANYLVFVLMYFF) threads the bilayer. Over 152-351 (PRQLLIRHFW…SANYLQSIKQ (200 aa)) the chain is Mitochondrial intermembrane. The Letm1 RBD domain maps to 172–351 (IYHRMRVEAY…SANYLQSIKQ (180 aa)).

It is found in the mitochondrion outer membrane. The protein localises to the nucleus. Its subcellular location is the mitochondrion inner membrane. Functionally, may play an essential role for mitochondrial structure and function. The polypeptide is LETM1 domain-containing protein 1 (Xenopus tropicalis (Western clawed frog)).